Consider the following 592-residue polypeptide: A-type ATP synthase subunit A (592 aa).

234–241 is an ATP binding site; that stretch reads GAFGTGKT.

It belongs to the ATPase alpha/beta chains family. As to quaternary structure, has multiple subunits with at least A(3), B(3), C, D, E, F, H, I and proteolipid K(x).

It is found in the cell membrane. The catalysed reaction is ATP + H2O + 4 H(+)(in) = ADP + phosphate + 5 H(+)(out). Functionally, component of the A-type ATP synthase that produces ATP from ADP in the presence of a proton gradient across the membrane. The A chain is the catalytic subunit. This is A-type ATP synthase subunit A from Nitrosopumilus maritimus (strain SCM1).